We begin with the raw amino-acid sequence, 80 residues long: U6-ctenitoxin-Pn1a (80 aa).

Residues 1–21 (MWLKIQVFVLALALITLGIQA) form the signal peptide. Residues 22–37 (EPNSGPNNPLIQEEAR) constitute a propeptide that is removed on maturation. Disulfide bonds link Cys39-Cys54, Cys46-Cys59, Cys53-Cys69, and Cys61-Cys67. The propeptide occupies 72 to 80 (TLGDLFGRR).

Belongs to the neurotoxin 02 (plectoxin) family. 01 (Tx3) subfamily. In terms of tissue distribution, expressed by the venom gland.

It is found in the secreted. Its function is as follows. Antagonist of L-type calcium channels (Cav1/CACNA1). This Phoneutria nigriventer (Brazilian armed spider) protein is U6-ctenitoxin-Pn1a.